We begin with the raw amino-acid sequence, 228 residues long: uncharacterized protein (228 aa).

Positions 1-15 (MKQKYLFIASMALAG) are cleaved as a signal peptide. Residue C16 is the site of N-palmitoyl cysteine attachment. Residue C16 is the site of S-diacylglycerol cysteine attachment.

To P.multocida PM0015.

It localises to the cell membrane. This is an uncharacterized protein from Pasteurella multocida (strain Pm70).